Consider the following 458-residue polypeptide: UDP-N-acetylglucosamine 1-carboxyvinyltransferase (458 aa).

A phosphoenolpyruvate-binding site is contributed by 34 to 35 (KN). Arg104 is a binding site for UDP-N-acetyl-alpha-D-glucosamine. The Proton donor role is filled by Cys128. At Cys128 the chain carries 2-(S-cysteinyl)pyruvic acid O-phosphothioketal. Asp320 and Val342 together coordinate UDP-N-acetyl-alpha-D-glucosamine.

It belongs to the EPSP synthase family. MurA subfamily.

It is found in the cytoplasm. The catalysed reaction is phosphoenolpyruvate + UDP-N-acetyl-alpha-D-glucosamine = UDP-N-acetyl-3-O-(1-carboxyvinyl)-alpha-D-glucosamine + phosphate. It functions in the pathway cell wall biogenesis; peptidoglycan biosynthesis. Functionally, cell wall formation. Adds enolpyruvyl to UDP-N-acetylglucosamine. This Prochlorococcus marinus (strain NATL1A) protein is UDP-N-acetylglucosamine 1-carboxyvinyltransferase.